Consider the following 530-residue polypeptide: Phosphoenolpyruvate carboxykinase (ATP) (530 aa).

Substrate-binding residues include Arg-58, Tyr-195, and Lys-201. ATP-binding positions include Lys-201, His-220, and Gly-236 to Thr-244. Positions 201 and 220 each coordinate Mn(2+). Residue Asp-257 participates in Mn(2+) binding. ATP contacts are provided by residues Glu-285, Arg-321, Arg-440 to Ile-441, and Thr-446. Position 321 (Arg-321) interacts with substrate.

This sequence belongs to the phosphoenolpyruvate carboxykinase (ATP) family. Mn(2+) serves as cofactor.

The protein resides in the cytoplasm. It carries out the reaction oxaloacetate + ATP = phosphoenolpyruvate + ADP + CO2. The protein operates within carbohydrate biosynthesis; gluconeogenesis. Functionally, involved in the gluconeogenesis. Catalyzes the conversion of oxaloacetate (OAA) to phosphoenolpyruvate (PEP) through direct phosphoryl transfer between the nucleoside triphosphate and OAA. This Staphylococcus epidermidis (strain ATCC 35984 / DSM 28319 / BCRC 17069 / CCUG 31568 / BM 3577 / RP62A) protein is Phosphoenolpyruvate carboxykinase (ATP).